The primary structure comprises 979 residues: MHC class II regulatory factor RFX1 (979 aa).

Disordered regions lie at residues 1 to 136 (MATQ…QVVQ), 181 to 227 (QSAA…PTGT), and 370 to 405 (TSTGAGASNSSGGGGSGGGGGGGGGGGGGGSGSTGG). Positions 12-44 (APPPSQPPQAPPQAQPQPPPPPPPAAPQPPQPP) are enriched in pro residues. A compositionally biased stretch (low complexity) spans 45–73 (TAAATPQPQYVTELQSPQPQAQPPGGQKQ). Ser60 carries the phosphoserine modification. Residues 81-96 (VPAPSQPTGAPTPSPA) are compositionally biased toward pro residues. Residues 114-126 (ETVSEASPGSTAS) are compositionally biased toward polar residues. Over residues 127–136 (QTGVPTQVVQ) the composition is skewed to low complexity. Composition is skewed to polar residues over residues 190–203 (GQVSLTVHGTQQVH) and 209–220 (SPVQANSSSSKT). Residues 370 to 379 (TSTGAGASNS) show a composition bias toward low complexity. Positions 380–405 (SGGGGSGGGGGGGGGGGGGGSGSTGG) are enriched in gly residues. The segment at residues 438–513 (TVQWLLDNYE…YHYYGLRIKA (76 aa)) is a DNA-binding region (RFX-type winged-helix). The tract at residues 744–979 (FAQTLRRYTS…GLFVQALPSS (236 aa)) is necessary for dimerization. The interval 915–960 (SLNPLDPDKDEEEEEEEESEDELPQDISLAAGGESPALGPETLEPP) is disordered. A compositionally biased stretch (acidic residues) spans 922–938 (DKDEEEEEEEESEDELP). Residues Ser978 and Ser979 each carry the phosphoserine modification.

It belongs to the RFX family. As to quaternary structure, homodimer; binds DNA as a homodimer. Heterodimer; heterodimerizes with RFX2 and RFX3.

The protein resides in the nucleus. Its function is as follows. Regulatory factor essential for MHC class II genes expression. Binds to the X boxes of MHC class II genes. Also binds to an inverted repeat (ENH1) required for hepatitis B virus genes expression and to the most upstream element (alpha) of the RPL30 promoter. This chain is MHC class II regulatory factor RFX1 (RFX1), found in Homo sapiens (Human).